The chain runs to 108 residues: Peptidyl-prolyl cis-trans isomerase FKBP1B (108 aa).

Residues 20 to 108 (GQTCVVHYTG…IFDVELLNLE (89 aa)) enclose the PPIase FKBP-type domain.

In terms of assembly, identified in a complex composed of RYR2, FKBP1B, PKA catalytic subunit, PRKAR2A, AKAP6, and the protein phosphatases PP2A and PP1. Interacts directly with RYR2.

It is found in the cytoplasm. It localises to the sarcoplasmic reticulum. The catalysed reaction is [protein]-peptidylproline (omega=180) = [protein]-peptidylproline (omega=0). With respect to regulation, inhibited by both FK506 and rapamycin. Its function is as follows. Has the potential to contribute to the immunosuppressive and toxic effects of FK506 and rapamycin. PPIases accelerate the folding of proteins. It catalyzes the cis-trans isomerization of proline imidic peptide bonds in oligopeptides. This Bos taurus (Bovine) protein is Peptidyl-prolyl cis-trans isomerase FKBP1B (FKBP1B).